A 450-amino-acid chain; its full sequence is Phosphoglucosamine mutase (450 aa).

Serine 104 acts as the Phosphoserine intermediate in catalysis. Mg(2+)-binding residues include serine 104, aspartate 241, aspartate 243, and aspartate 245. Residue serine 104 is modified to Phosphoserine.

This sequence belongs to the phosphohexose mutase family. Mg(2+) serves as cofactor. In terms of processing, activated by phosphorylation.

It carries out the reaction alpha-D-glucosamine 1-phosphate = D-glucosamine 6-phosphate. Catalyzes the conversion of glucosamine-6-phosphate to glucosamine-1-phosphate. The protein is Phosphoglucosamine mutase of Renibacterium salmoninarum (strain ATCC 33209 / DSM 20767 / JCM 11484 / NBRC 15589 / NCIMB 2235).